The sequence spans 323 residues: Aldo-keto reductase family 1 member C13 (323 aa).

NAD(+) contacts are provided by residues 20–24, Asp-50, and Tyr-55; that span reads GFGTY. Residue Tyr-55 is the Proton donor of the active site. Substrate is bound at residue His-117. Residues 166-167, Gln-190, 216-224, and 270-280 each bind NAD(+); these read SN, YGALGTQRY, and QSFKENEMREN.

The protein belongs to the aldo/keto reductase family.

Functionally, catalyzes the dehydrogenation of 17-beta-hydroxysteroids. May also exhibit significant activity with a variety of cyclic and alicyclic alcohols. Uses both NAD and NADP, but the activity is much greater with NAD than with NADP. This chain is Aldo-keto reductase family 1 member C13 (Akr1c13), found in Mus musculus (Mouse).